The sequence spans 215 residues: Ribonuclease HII (215 aa).

Residues 19 to 213 enclose the RNase H type-2 domain; the sequence is QTVAGVDEVG…SLRQPSQQID (195 aa). Residues D25, E26, and D121 each contribute to the a divalent metal cation site.

It belongs to the RNase HII family. Requires Mn(2+) as cofactor. Mg(2+) is required as a cofactor.

It localises to the cytoplasm. It carries out the reaction Endonucleolytic cleavage to 5'-phosphomonoester.. Functionally, endonuclease that specifically degrades the RNA of RNA-DNA hybrids. The chain is Ribonuclease HII from Synechococcus elongatus (strain ATCC 33912 / PCC 7942 / FACHB-805) (Anacystis nidulans R2).